The chain runs to 351 residues: Putative aryl-alcohol dehydrogenase C977.14c (351 aa).

Position 113 is a phosphoserine (Ser113).

This sequence belongs to the aldo/keto reductase family. Aldo/keto reductase 2 subfamily.

It is found in the cytoplasm. It localises to the nucleus. This is Putative aryl-alcohol dehydrogenase C977.14c from Schizosaccharomyces pombe (strain 972 / ATCC 24843) (Fission yeast).